The following is a 901-amino-acid chain: MGAASCEDEELEFKLVFGEEKEPPPLGPGGPGEELDSEDTPPCCRLALGEPLPYGAAPIGIPRPPPPRPGMHSPPPRPAPSPGTWESQPARSVRLGGPGGNAGGAGGGRVLECPSIRITSISPTPDPPTSLEDTSETWGDGSPRDYPPPEGFGGYREAGGQGGGAFFSPSPGSSSLSSWSFFSDASDEAALYAACDEVESELNEAASRFGLSSPLPSPRASPRPWTPEDPWSLYGPSSGGRAPEDSWLLLSAPGPVPASPRPASPCGKRRYSSSGTPSSASPALSRRGSLGEEGPEPPPPPPLPLVRDPSSPGPFDYVGAPPTESIPQKTRRTSSEQAVALPRSEEPPSCNGKLPSGTEDSVAAPGALRKEVAGMDYLAVPSPLAWSKARIGGHSPIFRTSALPPLDWPLPSQYEQLELRIEVQPRAHHRAHYETEGSRGAVKAAPGGHPVVKLLGYSEKPLTLQMFIGTADERSLRPHAFYQVHRITGKMVATASYEAVVSGTKVLEMTLLPENNMAANIDCAGILKLRNSDIELRKGETDIGRKNTRVRLVFRVHVPQGGGKVVSVQAASVPIECSQRSAQELPQVETYSPSACSVRGGEELVLTGSNFLPDSKVVFIERGPDGKLQWEEEAAVNRLQSSEVTLTLTIPEYSNKRVSRPVQVYFYVSNGRRKRSPTQSFKFLPVVFKEEPLPDSSLRGFPSTSGPPFGPDVDFSPPRPPYPSYPHEDPAYETPYLSEGFGYSTPALYPQTGPPPSYRSGLRMFPETGGTTGCARLPSVSFLPRPFPGDQYGGQGSSFALGLPFSPPAPFRPPLPSSPPLEDPFHPQSAIHPLPPEGYNEVGPGYTPGEGASEQEKARGGYSSGFRDSVPIQGITLEEVSEIIGRDLSGFPARPGEEPPA.

Disordered stretches follow at residues 15 to 179 and 203 to 362; these read LVFG…LSSW and NEAA…EDSV. A compositionally biased stretch (pro residues) spans 61–81; that stretch reads IPRPPPPRPGMHSPPPRPAPS. Residues 96-109 are compositionally biased toward gly residues; that stretch reads GGPGGNAGGAGGGR. The calcineurin-binding stretch occupies residues 114–119; that stretch reads PSIRIT. Residues 114–123 show a composition bias toward low complexity; it reads PSIRITSISP. Residues 151 to 165 show a composition bias toward gly residues; the sequence is GFGGYREAGGQGGGA. Residues 166 to 179 are compositionally biased toward low complexity; the sequence is FFSPSPGSSSLSSW. 2 positions are modified to phosphoserine; by MAPK7 and MAPK14: serine 168 and serine 170. 2 positions are modified to phosphoserine; by MAPK8 and MAPK9: serine 213 and serine 217. The SP 1 repeat unit spans residues 213 to 229; sequence SPLPSPRASPRPWTPED. The tract at residues 213–293 is 2 approximate SP repeats; it reads SPLPSPRASP…LSRRGSLGEE (81 aa). Composition is skewed to pro residues over residues 215–227 and 254–263; these read LPSPRASPRPWTP and GPVPASPRPA. A Nuclear localization signal motif is present at residues 268-270; the sequence is KRR. Over residues 272–288 the composition is skewed to low complexity; sequence SSSGTPSSASPALSRRG. An SP 2; approximate repeat occupies 277-293; the sequence is PSSASPALSRRGSLGEE. Serine 289 carries the phosphoserine modification. Position 334 is a phosphoserine; by RPS6KA3 (serine 334). Serine 344 bears the Phosphoserine mark. One can recognise an RHD domain in the interval 401–582; sequence SALPPLDWPL…VPIECSQRSA (182 aa). The DNA-binding element occupies 430–437; that stretch reads RAHYETEG. The IPT/TIG domain maps to 586–683; that stretch reads PQVETYSPSA…KRSPTQSFKF (98 aa). The Nuclear localization signal signature appears at 672–674; sequence RRK. Residue lysine 689 forms a Glycyl lysine isopeptide (Lys-Gly) (interchain with G-Cter in SUMO2) linkage. Disordered regions lie at residues 695–721 and 827–869; these read DSSLRGFPSTSGPPFGPDVDFSPPRPP and PQSA…FRDS.

In terms of assembly, member of the multicomponent NFATC transcription complex that consists of at least two components, a pre-existing cytoplasmic component NFATC2 and an inducible nuclear component NFATC1. Other NFAT proteins, such as NFATC3, or members of the activating protein-1 (AP-1) family and MAF can also bind the complex. NFAT proteins can bind DNA as monomers or dimers. Component of a promoter-binding complex composed of STAT3, NFATC3 and NFATC4; complex formation is enhanced by calcineurin. Interacts with CREBBP; this interaction potentiates transcription activation. Interacts with MAPK8/JNK1 and MAPK9/JNK2. Interacts with GATA4 (via the second Zn finger). Interacts (via N-terminus) with IRAK1 (via C-terminus). Interacts with RPS6KA3. Interacts with HOMER1, HOMER2 and HOMER3; this interaction competes with calcineurin/PPP3CA-binding and hence prevents NFATC4 dephosphorylation and activation. Interacts with ESR1 and ESR2; this interaction decreases NFATC4 transcriptional activity. Interacts with MTOR and MAPK7/ERK5. Interacts with TRIM17; this interaction prevents NFATC3 nuclear localization. Interacts with TCF25 (via C-terminus); the interaction leads to suppression of NFATC4 transcription factor activity and is reduced following stimulation with angiotensin-2. Phosphorylated by NFATC-kinases; dephosphorylated by calcineurin/PPP3CA. Phosphorylated on Ser-168 and Ser-170 by MTOR, IRAK1, MAPK7/ERK5 and MAPK14/p38, on Ser-213 and Ser-217 by MAPK8 and MAPK9, and on Ser-289 and Ser-344 by RPS6KA3. Phosphorylated by GSK3B. Phosphorylation by GSK3B markedly increases NFATC4 ubiquitination. Phosphorylation by MAPK8/JNK1, MAPK9/JNK2 and RPS6KA3 may stimulate NFATC4 transcriptional activity. Phosphorylation at Ser-168 and Ser-170 is stimulated by UV irradiation. Post-translationally, ubiquitinated, leading to degradation by the proteasome. Ubiquitination may be stimulated by GSK3B-dependent phosphorylation. Polyubiquitin linkage mainly occurs through 'Lys-48'. Widely expressed. In the brain, expressed in neurons. Expressed in the hippocampus (at protein level). In the hippocampus, expressed in both the CA1-CA3 pyramidal cells and the dentate gyrus granular cells. Expressed in a subset of hippocampal cells representing adult-born neurons (at protein level). Expressed in the submandibular gland (at protein level). In the olfactory system, expressed at low levels in the glomerular and granular layers and in the mitral cell layer. In the cerebellum, expressed at moderate levels in granular neurons. Expressed at moderate levels in the choroid plexus and ependymal cells. Expressed in neurons of the cochlear nucleus (at protein level). Expressed at low levels in the heart (at protein level). Expressed in ventricular cardiomyocytes (at protein level). Expressed in the lung.

It is found in the cytoplasm. The protein localises to the nucleus. In terms of biological role, ca(2+)-regulated transcription factor that is involved in several processes, including the development and function of the immune, cardiovascular, musculoskeletal, and nervous systems. Involved in T-cell activation, stimulating the transcription of cytokine genes, including that of IL2 and IL4. Following JAK/STAT signaling activation and as part of a complex with NFATC3 and STAT3, binds to the alpha-beta E4 promoter region of CRYAB and activates transcription in cardiomyocytes. Along with NFATC3, involved in embryonic heart development. Involved in mitochondrial energy metabolism required for cardiac morphogenesis and function. Transactivates many genes involved in heart physiology. Along with GATA4, binds to and activates NPPB/BNP promoter. Activates NPPA/ANP/ANF and MYH7/beta-MHC transcription. Binds to and transactivates AGTR2 gene promoter. Involved in the regulation of adult hippocampal neurogenesis. Involved in BDNF-driven pro-survival signaling in hippocampal adult-born neurons. Involved in the formation of long-term spatial memory and long-term potentiation. In cochlear nucleus neurons, may play a role in deafferentation-induced apoptosis during a developmental critical period when auditory neurons depend on afferent input for survival. Binds to and activates the BACE1/Beta-secretase 1 promoter, hence may regulate the proteolytic processing of the amyloid precursor protein (APP). Plays a role in adipocyte differentiation. May be involved in myoblast differentiation into myotubes. Binds the consensus DNA sequence 5'-GGAAAAT-3'. In the presence of CREBBP, activates TNF transcription. Binds to PPARG gene promoter and regulates its activity. Binds to PPARG and REG3G gene promoters. The polypeptide is Nuclear factor of activated T-cells, cytoplasmic 4 (Mus musculus (Mouse)).